Reading from the N-terminus, the 365-residue chain is S-adenosylmethionine:tRNA ribosyltransferase-isomerase (365 aa).

This sequence belongs to the QueA family. In terms of assembly, monomer.

It localises to the cytoplasm. It carries out the reaction 7-aminomethyl-7-carbaguanosine(34) in tRNA + S-adenosyl-L-methionine = epoxyqueuosine(34) in tRNA + adenine + L-methionine + 2 H(+). The protein operates within tRNA modification; tRNA-queuosine biosynthesis. Transfers and isomerizes the ribose moiety from AdoMet to the 7-aminomethyl group of 7-deazaguanine (preQ1-tRNA) to give epoxyqueuosine (oQ-tRNA). The chain is S-adenosylmethionine:tRNA ribosyltransferase-isomerase from Rickettsia peacockii (strain Rustic).